A 1336-amino-acid chain; its full sequence is Zinc finger protein 335 (1336 aa).

Disordered regions lie at residues 1–108 (MEEN…LVHS) and 199–222 (PTST…LAQP). Low complexity-rich tracts occupy residues 31–45 (TSEA…AATA) and 54–65 (SGVGQSSDSGSR). A C2H2-type 1 zinc finger spans residues 247–270 (FKCKMCQYRSSTKATLLRHMRERH). Disordered regions lie at residues 282–398 (AGKR…PSSS) and 415–442 (VSQS…GRPS). The segment covering 300 to 331 (EEGPEEEEEDDDIVDAGAIDDLEEDSDYNPAE) has biased composition (acidic residues). Low complexity predominate over residues 339–349 (LRLQRPTPSTL). Residues 350–361 (RPRRRPGRPRKL) show a composition bias toward basic residues. The span at 362 to 373 (PRLETSDLHDGI) shows a compositional bias: basic and acidic residues. The span at 378-387 (VSSQSTQSPP) shows a compositional bias: polar residues. 8 consecutive C2H2-type zinc fingers follow at residues 465-487 (YLCR…VNSH), 495-517 (FKCL…MFNH), 523-545 (YKCD…AAVH), 562-584 (FPCP…MKTH), 590-612 (HMCD…LLTH), 621-643 (FKCE…QLSH), 649-672 (FKCS…AVKH), and 678-701 (FACE…RCRH). Disordered stretches follow at residues 732-766 (LKQQ…TPPL) and 961-1013 (LQCG…AAAS). Residues 752 to 766 (PQEPAPFQPPETPPL) are compositionally biased toward pro residues. 2 positions are modified to phosphoserine: S975 and S1006. 4 C2H2-type zinc fingers span residues 1018 to 1040 (FSCK…KRAH), 1046 to 1068 (FKCP…MAQH), 1074 to 1096 (HQCN…MLTH), and 1102 to 1125 (FSCH…QRLH). Residue K1021 forms a Glycyl lysine isopeptide (Lys-Gly) (interchain with G-Cter in SUMO2) linkage. Residue S1148 is modified to Phosphoserine.

Belongs to the krueppel C2H2-type zinc-finger protein family. In terms of assembly, interacts with NCOA6; may enhance ligand-dependent transcriptional activation by nuclear hormone receptors. Interacts with CNOT6. Interacts with CNOT9; the interaction is direct. Component of a nuclear receptor-mediated transcription complex composed of at least ZNF335, CCAR2 and EMSY; the complex stimulates the transcription of nuclear receptor target genes such as SOX9 and HOXA1. Within the complex interacts with EMSY and interacts (via C-terminus) with CCAR2. Interacts with members of histone H3'Lys4'(H3K4) methyltransferase complexes ASH2L, CXXC1, KMT2A/MLL1, RBBP5, SETD1A and WDR5. Component of a histone methylation complex composed of at least ZNF335, RBBP5, ASH2L and WDR5; the complex may have histone H3-specific methyltransferase activity, however does not have specificity for 'Lys-4' of histone H3. Interacts with RBBP5 and WDR5. Interacts with ASHL2. Components of this complex may associate with components of the ZNF335-CCAR2-EMSY nuclear receptor-mediated transcription complex to form a complex at least composed of ZNF335, HCFC1, CCAR2, EMSY, MKI67, RBBP5, ASH2L and WDR5. Within this complex also interacts with HCFC1 and MKI67.

It localises to the nucleus. Component or associated component of some histone methyltransferase complexes may regulate transcription through recruitment of those complexes on gene promoters. Enhances ligand-dependent transcriptional activation by nuclear hormone receptors. Plays an important role in neural progenitor cell proliferation and self-renewal through the regulation of specific genes involved brain development, including REST. Also controls the expression of genes involved in somatic development and regulates, for instance, lymphoblast proliferation. The sequence is that of Zinc finger protein 335 (Znf335) from Rattus norvegicus (Rat).